The following is a 142-amino-acid chain: MVLSPTDKSNVKATWAKIGNHGAEYGAEALERMFMNFPSTKTYFPHFDLGHDSAQVKGHGKKVADALTKAVGHMDNLLDALSDLSDLHAHKLRVDPANFKLLSHCLLVTLALHLPAEFTPSVHASLDKFLASVSTVLTSKYR.

Residues 2–142 (VLSPTDKSNV…VSTVLTSKYR (141 aa)) enclose the Globin domain. Serine 4 carries the post-translational modification Phosphoserine. 2 positions are modified to N6-succinyllysine: lysine 8 and lysine 12. At lysine 17 the chain carries N6-acetyllysine; alternate. An N6-succinyllysine; alternate modification is found at lysine 17. Tyrosine 25 is modified (phosphotyrosine). Lysine 41 carries the post-translational modification N6-succinyllysine. Position 59 (histidine 59) interacts with O2. Histidine 88 provides a ligand contact to heme b. Serine 103 carries the phosphoserine modification. Threonine 109 bears the Phosphothreonine mark. 2 positions are modified to phosphoserine: serine 125 and serine 132. Threonine 135 and threonine 138 each carry phosphothreonine. A Phosphoserine modification is found at serine 139.

It belongs to the globin family. As to quaternary structure, heterotetramer of two alpha chains and two beta chains. As to expression, red blood cells.

Functionally, involved in oxygen transport from the lung to the various peripheral tissues. Its function is as follows. Hemopressin acts as an antagonist peptide of the cannabinoid receptor CNR1. Hemopressin-binding efficiently blocks cannabinoid receptor CNR1 and subsequent signaling. The chain is Hemoglobin subunit alpha (HBA) from Balaenoptera acutorostrata (Common minke whale).